Reading from the N-terminus, the 254-residue chain is Lipid uptake coordinator A (254 aa).

Helical transmembrane passes span 5 to 25, 44 to 64, 85 to 105, and 114 to 134; these read VAVL…FYFV, LRIA…FTLL, IMAH…EVWL, and LFGI…GFYL. A disordered region spans residues 143–254; it reads PPPKPLKPKK…SGVQVAKVDE (112 aa). Positions 148–163 are enriched in basic residues; sequence LKPKKPKQRRLRRKKT. Residues 169 to 191 are compositionally biased toward acidic residues; the sequence is AEPEAAEEAENTELAAQEDEEAV. The span at 192-220 shows a compositional bias: low complexity; it reads EAPPESIESPGGEPESATREAPAAETATA. Positions 227 to 244 are enriched in basic residues; sequence LRNRRPTGKTSHRRRRTR.

In terms of assembly, interacts with the Mce1 and Mce4 accessory subunits Rv0199/OmamA, Rv0177/Mam1C and Rv3492c/Mam4B.

It is found in the cell membrane. Its function is as follows. Required for the import of both fatty acids and cholesterol during growth in macrophages and in axenic culture. Facilitates the uptake of these lipids by stabilizing protein subunits of the Mce1 and Mce4 multi-subunit transporters, which transport fatty acids and cholesterol, respectively. Required for full virulence in vivo. This is Lipid uptake coordinator A from Mycobacterium tuberculosis (strain ATCC 25618 / H37Rv).